A 108-amino-acid polypeptide reads, in one-letter code: uncharacterized protein (108 aa).

The interval 56–108 (ELPSRGCLPAPRPESGQGRLSTGISQNGGRSSAQPCPRCIAGESGHFSHTKNH) is disordered. Polar residues predominate over residues 73 to 89 (GRLSTGISQNGGRSSAQ).

This is an uncharacterized protein from Homo sapiens (Human).